Reading from the N-terminus, the 469-residue chain is Glutamate--tRNA ligase (469 aa).

Residues 11 to 21 carry the 'HIGH' region motif; sequence PSPTGFIHLGN. Over residues 118–131 the composition is skewed to basic and acidic residues; that stretch reads GEKPRYDGTWRPEP. The disordered stretch occupies residues 118 to 138; that stretch reads GEKPRYDGTWRPEPGKVLPEP. Positions 243 to 247 match the 'KMSKS' region motif; sequence KMSKR. An ATP-binding site is contributed by Lys246.

It belongs to the class-I aminoacyl-tRNA synthetase family. Glutamate--tRNA ligase type 1 subfamily. In terms of assembly, monomer.

It is found in the cytoplasm. It carries out the reaction tRNA(Glu) + L-glutamate + ATP = L-glutamyl-tRNA(Glu) + AMP + diphosphate. Catalyzes the attachment of glutamate to tRNA(Glu) in a two-step reaction: glutamate is first activated by ATP to form Glu-AMP and then transferred to the acceptor end of tRNA(Glu). This chain is Glutamate--tRNA ligase, found in Burkholderia vietnamiensis (strain G4 / LMG 22486) (Burkholderia cepacia (strain R1808)).